The following is a 582-amino-acid chain: Hydrazine dehydrogenase (582 aa).

An N-terminal signal peptide occupies residues 1–32 (MRKFLKVTLASALIGCGVIGTVSSLMVKEAKA). Heme c contacts are provided by cysteine 121, cysteine 124, histidine 125, histidine 141, cysteine 151, cysteine 154, histidine 155, histidine 159, cysteine 170, cysteine 175, histidine 176, histidine 191, cysteine 216, cysteine 219, histidine 220, cysteine 227, cysteine 230, histidine 231, histidine 234, cysteine 247, cysteine 250, histidine 251, histidine 267, cysteine 297, cysteine 300, histidine 301, histidine 306, cysteine 342, cysteine 345, histidine 346, histidine 454, and tyrosine 462. Positions 561–582 (GSHSAHHHESGHDPAARSMKEH) are disordered. The span at 567–582 (HHESGHDPAARSMKEH) shows a compositional bias: basic and acidic residues.

Homotrimer; subunits are linked by two covalent bonds between Tyr-462 of one subunit and heme P460 of an adjacent subunit. May form 24-mer of an octamer of trimers. Heme c is required as a cofactor.

The protein resides in the anammoxosome. The enzyme catalyses hydrazine + 4 Fe(III)-[cytochrome c] = N2 + 4 Fe(II)-[cytochrome c] + 4 H(+). It participates in nitrogen metabolism. Is strongly and competitively inhibited by NO and hydroxylamine. Functionally, catalyzes the four-electron oxidation of hydrazine to N2. The electrons derived from hydrazine oxidation may be transferred to the quinone pool and exploited to promote the generation of proton-motive force (pmf) across the anammoxosome membrane. Is involved in anaerobic ammonium oxidation (anammox), a biological process in which nitrite is used as the electron acceptor in the conversion of ammonium to dinitrogen gas (N2) and water; this bacterial process has a major role in the Earth's nitrogen cycle and has been estimated to synthesize up to 50% of the dinitrogen gas emitted into our atmosphere from the oceans. Cannot oxidize hydroxylamine to NO. This Kuenenia stuttgartiensis protein is Hydrazine dehydrogenase.